A 378-amino-acid chain; its full sequence is Spermidine/putrescine import ATP-binding protein PotA (378 aa).

The 231-residue stretch at 18-248 (VLLSGISKSF…PKNLFVAGFI (231 aa)) folds into the ABC transporter domain. 50–57 (GPSGCGKT) provides a ligand contact to ATP.

It belongs to the ABC transporter superfamily. Spermidine/putrescine importer (TC 3.A.1.11.1) family. As to quaternary structure, the complex is composed of two ATP-binding proteins (PotA), two transmembrane proteins (PotB and PotC) and a solute-binding protein (PotD).

It is found in the cell inner membrane. It carries out the reaction ATP + H2O + polyamine-[polyamine-binding protein]Side 1 = ADP + phosphate + polyamineSide 2 + [polyamine-binding protein]Side 1.. Functionally, part of the ABC transporter complex PotABCD involved in spermidine/putrescine import. Responsible for energy coupling to the transport system. In Salmonella paratyphi A (strain ATCC 9150 / SARB42), this protein is Spermidine/putrescine import ATP-binding protein PotA.